Consider the following 408-residue polypeptide: Acetate kinase (408 aa).

Residue Asn-7 participates in Mg(2+) binding. ATP is bound at residue Lys-14. A substrate-binding site is contributed by Arg-91. The Proton donor/acceptor role is filled by Asp-148. ATP is bound by residues 208–212 (HLGNG), 283–285 (DFR), and 331–335 (GIGEN). Glu-384 is a binding site for Mg(2+).

This sequence belongs to the acetokinase family. In terms of assembly, homodimer. Mg(2+) serves as cofactor. It depends on Mn(2+) as a cofactor.

It is found in the cytoplasm. The enzyme catalyses acetate + ATP = acetyl phosphate + ADP. It functions in the pathway metabolic intermediate biosynthesis; acetyl-CoA biosynthesis; acetyl-CoA from acetate: step 1/2. Its function is as follows. Catalyzes the formation of acetyl phosphate from acetate and ATP. Can also catalyze the reverse reaction. The sequence is that of Acetate kinase from Methanosarcina mazei (Methanosarcina frisia).